We begin with the raw amino-acid sequence, 129 residues long: Protein Wnt-6 (129 aa).

5 disulfide bridges follow: Cys3–Cys17, Cys5–Cys12, Cys75–Cys106, Cys91–Cys101, and Cys128–Cys129. Ser9 carries O-palmitoleoyl serine; by PORCN lipidation. Asn92 carries N-linked (GlcNAc...) asparagine glycosylation.

It belongs to the Wnt family. Palmitoleoylation is required for efficient binding to frizzled receptors. Depalmitoleoylation leads to Wnt signaling pathway inhibition. As to expression, at tailbud: dorsal, punctate; in adult: brain and heart.

It localises to the secreted. The protein localises to the extracellular space. The protein resides in the extracellular matrix. Functionally, ligand for members of the frizzled family of seven transmembrane receptors. Probable developmental protein. May be a signaling molecule which affects the development of discrete regions of tissues. Is likely to signal over only few cell diameters. This Xenopus laevis (African clawed frog) protein is Protein Wnt-6 (wnt6).